The following is a 414-amino-acid chain: ZP domain-containing protein (414 aa).

The first 17 residues, 1 to 17 (MFLYSFVFLMLLGLSSA), serve as a signal peptide directing secretion. Residues 18–65 (QTESATSPDEVETEPTMSTDQPETSPSMSTETEPTTETPPVTTPPPPD) form a disordered region. Over 18–364 (QTESATSPDE…GAQEAVSSLT (347 aa)) the chain is Extracellular. The span at 39–57 (PETSPSMSTETEPTTETPP) shows a compositional bias: low complexity. The 254-residue stretch at 70 to 323 (ICTNEKMEVF…SRCAKGCETS (254 aa)) folds into the ZP domain. A disulfide bridge connects residues Cys-241 and Cys-302. A helical transmembrane segment spans residues 365–385 (IFAAVAGVLGVIVLFLAVALV). Residues 386–414 (MLYKRYRSPQSATRVVYTKTANEEGKLLV) lie on the Cytoplasmic side of the membrane.

Component of the acid-insoluble and acid-soluble organic matrix of the aragonitic skeleton (at protein level).

The protein localises to the membrane. The chain is ZP domain-containing protein from Acropora millepora (Staghorn coral).